A 343-amino-acid chain; its full sequence is MKNSQAVTSLTWWSVVVAYIVSTNSRLYIGWFGVLLFPLIAVSTVAYVAAFILAPPVDIDGIREPVSGSLLYSNNIITGAVIPSSNAIGVHFYPVWEAISNNEWLYNGGTYQFVVLHFLAAVLAWLGREYEYSFRLGMRPWIYLAFSAPVVAASAVFVVYPIGQGSFSDGMPLGISGTFNFMLVFQAEHNILMHPFHILGVSAVFGGSLFSAMHGSLVTSSLLSETASYDSLNAGYVFGQEDETYAISAAHGYFGRLLFQYGSFNNSRSLHFFLAAWPVIGIWCTAIGVSTMAFNLNGLNFNQSLLDSSGHVVNSWADVVNRADLGMEVMHERNTHNFPLDLA.

Transmembrane regions (helical) follow at residues 28 to 45, 117 to 132, and 141 to 155; these read YIGW…VSTV, HFLA…EYEY, and WIYL…AASA. His-117 is a chlorophyll a binding site. Pheophytin a is bound at residue Trp-125. Asp-169 and Glu-188 together coordinate [CaMn4O5] cluster. Residues 196–217 traverse the membrane as a helical segment; it reads FHILGVSAVFGGSLFSAMHGSL. Chlorophyll a is bound at residue His-197. A quinone-binding positions include His-214 and 263–264; that span reads SF. His-214 provides a ligand contact to Fe cation. His-271 contacts Fe cation. A helical membrane pass occupies residues 273 to 287; the sequence is FLAAWPVIGIWCTAI. His-331, Glu-332, Asp-341, and Ala-343 together coordinate [CaMn4O5] cluster.

The protein belongs to the reaction center PufL/M/PsbA/D family. As to quaternary structure, PSII is composed of 1 copy each of membrane proteins PsbA, PsbB, PsbC, PsbD, PsbE, PsbF, PsbH, PsbI, PsbJ, PsbK, PsbL, PsbM, PsbT, PsbX, PsbY, PsbZ, Psb30/Ycf12, at least 3 peripheral proteins of the oxygen-evolving complex and a large number of cofactors. It forms dimeric complexes. It depends on The D1/D2 heterodimer binds P680, chlorophylls that are the primary electron donor of PSII, and subsequent electron acceptors. It shares a non-heme iron and each subunit binds pheophytin, quinone, additional chlorophylls, carotenoids and lipids. D1 provides most of the ligands for the Mn4-Ca-O5 cluster of the oxygen-evolving complex (OEC). There is also a Cl(-1) ion associated with D1 and D2, which is required for oxygen evolution. The PSII complex binds additional chlorophylls, carotenoids and specific lipids. as a cofactor. In terms of processing, tyr-160 forms a radical intermediate that is referred to as redox-active TyrZ, YZ or Y-Z.

The protein resides in the plastid. The protein localises to the chloroplast thylakoid membrane. The enzyme catalyses 2 a plastoquinone + 4 hnu + 2 H2O = 2 a plastoquinol + O2. In terms of biological role, photosystem II (PSII) is a light-driven water:plastoquinone oxidoreductase that uses light energy to abstract electrons from H(2)O, generating O(2) and a proton gradient subsequently used for ATP formation. It consists of a core antenna complex that captures photons, and an electron transfer chain that converts photonic excitation into a charge separation. The D1/D2 (PsbA/PsbD) reaction center heterodimer binds P680, the primary electron donor of PSII as well as several subsequent electron acceptors. This Prorocentrum micans (Red tide dinoflagellate) protein is Photosystem II protein D1.